The primary structure comprises 72 residues: Mitotic-spindle organizing protein 1 (72 aa).

This sequence belongs to the MOZART1 family. As to quaternary structure, part of the gamma-tubulin complex.

Its subcellular location is the cytoplasm. It localises to the cytoskeleton. The protein resides in the microtubule organizing center. The protein localises to the spindle pole body. Its function is as follows. Required for gamma-tubulin complex recruitment to the microtubule organizing center (MTOC). This chain is Mitotic-spindle organizing protein 1, found in Cryptococcus neoformans var. neoformans serotype D (strain B-3501A) (Filobasidiella neoformans).